We begin with the raw amino-acid sequence, 308 residues long: GTP-binding protein RAD (308 aa).

Positions 1–16 (MTLNGGGSGAGGSRGG) are enriched in gly residues. Residues 1-88 (MTLNGGGSGA…SLSSGGSDSD (88 aa)) form a disordered region. Omega-N-methylarginine is present on Arg-24. Position 26 is a phosphoserine (Ser-26). A compositionally biased stretch (low complexity) spans 48–68 (QAALTPGALTAAAAGTGTQGP). GTP-binding positions include 98–105 (GAPGVGKS) and 203–206 (NKSD). The calmodulin-binding stretch occupies residues 278-297 (AKRFLGRIVARNSRKMAFRA).

The protein belongs to the small GTPase superfamily. RGK family. Interacts with calmodulin preferentially in the inactive, GDP-bound form. Binds CAMKII which is capable of phosphorylating RAD in vitro. Interacts with CAMK2D. Interacts with CACNB2; interaction may be involved in beta-adrenergic regulation of heart rate and contractile force. Interaction with CACNB2 regulates the trafficking of CACNA1C to the cell membrane. Most abundantly expressed in the heart. Also found in the skeletal muscle and lung. Lesser amounts in placenta and kidney. Also detected in adipose tissue. Overexpressed in muscle of type II diabetic humans.

The protein localises to the cell membrane. May regulate basal voltage-dependent L-type Ca(2+) currents and be required for beta-adrenergic augmentation of Ca(2+) influx in cardiomyocytes, thereby regulating increases in heart rate and contractile force. May play an important role in cardiac antiarrhythmia via the strong suppression of voltage-gated L-type Ca(2+) currents. Regulates voltage-dependent L-type calcium channel subunit alpha-1C trafficking to the cell membrane. Inhibits cardiac hypertrophy through the calmodulin-dependent kinase II (CaMKII) pathway. Inhibits phosphorylation and activation of CAMK2D. The polypeptide is GTP-binding protein RAD (RRAD) (Homo sapiens (Human)).